The chain runs to 194 residues: Oligoribonuclease (194 aa).

The region spanning Leu-11–Leu-174 is the Exonuclease domain. Tyr-132 is a catalytic residue.

The protein belongs to the oligoribonuclease family.

Its subcellular location is the cytoplasm. Its function is as follows. 3'-to-5' exoribonuclease specific for small oligoribonucleotides. This chain is Oligoribonuclease, found in Xanthomonas oryzae pv. oryzae (strain MAFF 311018).